Reading from the N-terminus, the 1040-residue chain is Vacuolar membrane protease (1040 aa).

The Cytoplasmic portion of the chain corresponds to 1-9; it reads MINPISFRP. The helical transmembrane segment at 10 to 30 threads the bilayer; it reads GPVTFWTTLIYLALLIPIVII. Over 31 to 405 the chain is Vacuolar; it reads NEEPPAAPKT…SFVLFGLRGM (375 aa). N-linked (GlcNAc...) asparagine glycans are attached at residues asparagine 48, asparagine 117, asparagine 120, and asparagine 129. Zn(2+) contacts are provided by histidine 186 and aspartate 198. Glutamate 232 (proton acceptor) is an active-site residue. 3 residues coordinate Zn(2+): glutamate 233, glutamate 258, and histidine 331. The chain crosses the membrane as a helical span at residues 406–426; it reads FAWSLTLLIATPLILVGITWL. The Cytoplasmic portion of the chain corresponds to 427–436; it reads LRNLDKDYFF. A helical transmembrane segment spans residues 437-456; that stretch reads TSTVKTKEHPEYEAVPIGGW. Residues 457–462 are Vacuolar-facing; sequence KGFFRW. Residues 463–483 traverse the membrane as a helical segment; sequence AMMVSIFYFSFWMIMRGANFV. Topologically, residues 484-490 are cytoplasmic; that stretch reads RPSALHR. The chain crosses the membrane as a helical span at residues 491-511; it reads GYANLWLFVFGWIVLVAVTAL. The Vacuolar segment spans residues 512–521; that stretch reads EDRRRIAAGY. A helical transmembrane segment spans residues 522-542; the sequence is IFVFLESAIFLSCLISFVELL. At 543–715 the chain is on the cytoplasmic side; sequence ALPRKSAYAL…YEHEQDWSGH (173 aa). Residues 563 to 680 are disordered; that stretch reads HSGYQGYRDS…NGTNDRGRTT (118 aa). Composition is skewed to low complexity over residues 577–594 and 616–626; these read SSGA…PSSP and APSVAAHSSQP. Residues 636 to 647 show a composition bias toward polar residues; the sequence is GRSTSAPIPSTT. The segment covering 650 to 661 has biased composition (acidic residues); the sequence is DEDESEDDDDEA. A helical transmembrane segment spans residues 716–736; sequence LPSWAWFFQFLLLGPFMIILA. Over 737 to 758 the chain is Vacuolar; it reads AQTGLMLTDAVYQTGSDGSKLF. A helical membrane pass occupies residues 759–779; that stretch reads TPYLMIFFFTLLLILPLTPFI. Over 780–785 the chain is Cytoplasmic; sequence HRVTHH. The chain crosses the membrane as a helical span at residues 786 to 806; the sequence is IPVFLLVVFIVTLTYNLIAFP. Over 807–1040 the chain is Vacuolar; the sequence is FSANNRYKAF…VEGRKAFKIV (234 aa). Asparagine 900 carries N-linked (GlcNAc...) asparagine glycosylation.

Belongs to the peptidase M28 family. The cofactor is Zn(2+).

The protein localises to the vacuole membrane. Functionally, may be involved in vacuolar sorting and osmoregulation. This is Vacuolar membrane protease from Sordaria macrospora (strain ATCC MYA-333 / DSM 997 / K(L3346) / K-hell).